The primary structure comprises 253 residues: Homeotic protein ultrabithorax (253 aa).

Positions 125-141 (GNTSNGSNAPNAANGQN) are enriched in low complexity. Residues 125-193 (GNTSNGSNAP…GNGTAGGVPQ (69 aa)) are disordered. Gly residues predominate over residues 176-189 (RGGGSAGGGNGTAG). An Antp-type hexapeptide motif is present at residues 237–242 (FYPWMA).

Belongs to the Antp homeobox family.

The protein localises to the nucleus. In terms of biological role, sequence-specific transcription factor which is part of a developmental regulatory system that provides cells with specific positional identities on the anterior-posterior axis. Binds the consensus region 5'-TTAAT[GT][GA]-3'. This homeotic protein controls development of the cells in the posterior thoracic and first abdominal segments. It activates the synthesis of the decapentaplegic (DPP) growth factor. The protein is Homeotic protein ultrabithorax (Ubx) of Drosophila funebris (Fruit fly).